Consider the following 393-residue polypeptide: Formate-dependent phosphoribosylglycinamide formyltransferase (393 aa).

N(1)-(5-phospho-beta-D-ribosyl)glycinamide contacts are provided by residues glutamate 22–leucine 23 and glutamate 82. ATP contacts are provided by residues arginine 114, lysine 155, serine 160 to glutamine 165, glutamate 195 to valine 198, and glutamate 203. The ATP-grasp domain occupies leucine 119 to leucine 308. Residues glutamate 267 and glutamate 279 each contribute to the Mg(2+) site. N(1)-(5-phospho-beta-D-ribosyl)glycinamide contacts are provided by residues aspartate 286, lysine 355, and arginine 362–arginine 363.

The protein belongs to the PurK/PurT family. As to quaternary structure, homodimer.

The catalysed reaction is N(1)-(5-phospho-beta-D-ribosyl)glycinamide + formate + ATP = N(2)-formyl-N(1)-(5-phospho-beta-D-ribosyl)glycinamide + ADP + phosphate + H(+). The protein operates within purine metabolism; IMP biosynthesis via de novo pathway; N(2)-formyl-N(1)-(5-phospho-D-ribosyl)glycinamide from N(1)-(5-phospho-D-ribosyl)glycinamide (formate route): step 1/1. In terms of biological role, involved in the de novo purine biosynthesis. Catalyzes the transfer of formate to 5-phospho-ribosyl-glycinamide (GAR), producing 5-phospho-ribosyl-N-formylglycinamide (FGAR). Formate is provided by PurU via hydrolysis of 10-formyl-tetrahydrofolate. This chain is Formate-dependent phosphoribosylglycinamide formyltransferase, found in Yersinia enterocolitica serotype O:8 / biotype 1B (strain NCTC 13174 / 8081).